The chain runs to 161 residues: Small ribosomal subunit protein uS9 (161 aa).

Residues 1–38 (MAQTITSLADLKQGPGAEPAGLSAEPQEPKLDKEGRAY) form a disordered region. Residues 27–38 (QEPKLDKEGRAY) are compositionally biased toward basic and acidic residues.

It belongs to the universal ribosomal protein uS9 family.

The polypeptide is Small ribosomal subunit protein uS9 (Rhodospirillum centenum (strain ATCC 51521 / SW)).